We begin with the raw amino-acid sequence, 142 residues long: Coactosin-like protein (142 aa).

Ala2 is subject to N-acetylalanine. The region spanning Ala2–Lys130 is the ADF-H domain. Position 23 is a phosphoserine (Ser23). The interval Thr66–Lys75 is flexible and important for F-actin binding. Lys102 carries the N6-acetyllysine modification. Ser141 is modified (phosphoserine).

Belongs to the actin-binding proteins ADF family. Coactosin subfamily. As to quaternary structure, interacts with 5-lipoxygenase (ALOX5/5LO) in a calcium-independent manner. Binds to F-actin with a stoichiometry of 1:2.

The protein resides in the cytoplasm. Its subcellular location is the cytoskeleton. It is found in the nucleus. Its function is as follows. Binds to F-actin in a calcium-independent manner. Has no direct effect on actin depolymerization. Acts as a chaperone for ALOX5 (5LO), influencing both its stability and activity in leukotrienes synthesis. This is Coactosin-like protein from Rattus norvegicus (Rat).